The following is a 676-amino-acid chain: Rho guanine nucleotide exchange factor 37 (676 aa).

Positions 1–26 are disordered; that stretch reads MADFETDEASSKSESPEQEGQGSEDK. The DH domain maps to 30–213; it reads HQRLAIRELI…QDVNSNINEY (184 aa). The region spanning 254–455 is the BAR domain; the sequence is LKQEAGLVPR…LPHRHVSEPD (202 aa). SH3 domains are found at residues 506 to 569 and 603 to 666; these read GPGK…LYHP and PTMS…RTPS. Disordered stretches follow at residues 568-601 and 657-676; these read HPIN…SVPT and PSNF…NLPS.

In terms of biological role, may act as a guanine nucleotide exchange factor (GEF). The sequence is that of Rho guanine nucleotide exchange factor 37 (Arhgef37) from Rattus norvegicus (Rat).